A 188-amino-acid chain; its full sequence is Elongation factor P (188 aa).

This sequence belongs to the elongation factor P family.

The protein localises to the cytoplasm. It participates in protein biosynthesis; polypeptide chain elongation. In terms of biological role, involved in peptide bond synthesis. Stimulates efficient translation and peptide-bond synthesis on native or reconstituted 70S ribosomes in vitro. Probably functions indirectly by altering the affinity of the ribosome for aminoacyl-tRNA, thus increasing their reactivity as acceptors for peptidyl transferase. The sequence is that of Elongation factor P from Aeromonas salmonicida (strain A449).